We begin with the raw amino-acid sequence, 756 residues long: Inactive carboxypeptidase-like protein X2 (756 aa).

Positions 1–25 (MSRPGTATPALALVLLAVTLAGVGA) are cleaved as a signal peptide. The disordered stretch occupies residues 51 to 131 (EPELETFSPP…DHSVRVARED (81 aa)). Basic and acidic residues predominate over residues 68–78 (EWERRPQEPRP). Over residues 79–90 (PKRATKPKKAPK) the composition is skewed to basic residues. Residues 113 to 131 (KSSEKAANDDHSVRVARED) show a composition bias toward basic and acidic residues. An F5/8 type C domain is found at 134 to 293 (ESCPPLGLET…ICMRMEILGC (160 aa)). A disulfide bridge connects residues Cys-136 and Cys-293. N-linked (GlcNAc...) asparagine glycans are attached at residues Asn-231, Asn-241, Asn-281, Asn-337, and Asn-491. In terms of domain architecture, Peptidase M14 spans 317 to 640 (KHHNYKEMRQ…ESLIVFMEQV (324 aa)).

The protein belongs to the peptidase M14 family.

The protein resides in the secreted. Functionally, may be involved in cell-cell interactions. This chain is Inactive carboxypeptidase-like protein X2 (CPXM2), found in Homo sapiens (Human).